The sequence spans 264 residues: Thymidylate synthase (264 aa).

Arg-21 is a dUMP binding site. His-51 is a binding site for (6R)-5,10-methylene-5,6,7,8-tetrahydrofolate. Residue 126 to 127 coordinates dUMP; the sequence is RR. The active-site Nucleophile is the Cys-146. DUMP is bound by residues 166–169, Asn-177, and 207–209; these read RSVD and HLY. Residue Asp-169 participates in (6R)-5,10-methylene-5,6,7,8-tetrahydrofolate binding. Ala-263 contributes to the (6R)-5,10-methylene-5,6,7,8-tetrahydrofolate binding site.

The protein belongs to the thymidylate synthase family. Bacterial-type ThyA subfamily. In terms of assembly, homodimer.

It localises to the cytoplasm. It carries out the reaction dUMP + (6R)-5,10-methylene-5,6,7,8-tetrahydrofolate = 7,8-dihydrofolate + dTMP. It functions in the pathway pyrimidine metabolism; dTTP biosynthesis. In terms of biological role, catalyzes the reductive methylation of 2'-deoxyuridine-5'-monophosphate (dUMP) to 2'-deoxythymidine-5'-monophosphate (dTMP) while utilizing 5,10-methylenetetrahydrofolate (mTHF) as the methyl donor and reductant in the reaction, yielding dihydrofolate (DHF) as a by-product. This enzymatic reaction provides an intracellular de novo source of dTMP, an essential precursor for DNA biosynthesis. The polypeptide is Thymidylate synthase (Geobacillus sp. (strain WCH70)).